Here is a 356-residue protein sequence, read N- to C-terminus: S-adenosylmethionine:tRNA ribosyltransferase-isomerase (356 aa).

This sequence belongs to the QueA family. As to quaternary structure, monomer.

It localises to the cytoplasm. It carries out the reaction 7-aminomethyl-7-carbaguanosine(34) in tRNA + S-adenosyl-L-methionine = epoxyqueuosine(34) in tRNA + adenine + L-methionine + 2 H(+). It participates in tRNA modification; tRNA-queuosine biosynthesis. In terms of biological role, transfers and isomerizes the ribose moiety from AdoMet to the 7-aminomethyl group of 7-deazaguanine (preQ1-tRNA) to give epoxyqueuosine (oQ-tRNA). The chain is S-adenosylmethionine:tRNA ribosyltransferase-isomerase from Escherichia coli O6:K15:H31 (strain 536 / UPEC).